The sequence spans 430 residues: Vitamin B6 salvage pathway transcriptional repressor PtsJ (430 aa).

One can recognise an HTH gntR-type domain in the interval 4 to 72 (GKTANEIFDS…GRNGTVIKGS (69 aa)). The H-T-H motif DNA-binding region spans 32–51 (VRELASELKVNRNTVAAAYK). The segment at 70-95 (KGSPSPVALEGGDPHTPLHDLSGGNP) is disordered. Lys-282 is modified (N6-(pyridoxal phosphate)lysine).

In the C-terminal section; belongs to the class-I pyridoxal-phosphate-dependent aminotransferase family. In terms of assembly, homodimer in both apo- and holo-forms.

Functionally, acts as a transcriptional repressor of the pdxK gene, encoding a pyridoxal kinase involved in the vitamin B6 salvage pathway. Also represses transcription of its own gene. Binds to the ptsJ-pdxK intergenic region, but does not bind pdxY and pdxH promoters. Among all six B6 vitamers, only pyridoxal 5'-phosphate (PLP) clearly binds to the protein and acts as an effector molecule for PtsJ, inducing a protein conformational change that increases affinity for DNA. Thus, PLP stabilizes protein-DNA interactions, reinforcing repression. In Salmonella typhimurium (strain LT2 / SGSC1412 / ATCC 700720), this protein is Vitamin B6 salvage pathway transcriptional repressor PtsJ.